The following is a 522-amino-acid chain: Glycoprotein (522 aa).

The first 25 residues, 1 to 25 (MSQLNLIPFFCVIIVLSVEDFPLYT), serve as a signal peptide directing secretion. Topologically, residues 26–455 (IPEKIGPWTP…VSDVDLGLPD (430 aa)) are virion surface. Residues 456-476 (WSLYALIGATIIAFFILICLI) traverse the membrane as a helical segment. Topologically, residues 477–522 (RICCKKGGRRNSPTNRPDLPIGLSTTPQPKSKVISSWESYKGTSNV) are intravirion. Cys480 carries S-palmitoyl cysteine; by host lipidation.

It belongs to the lyssavirus glycoprotein family. As to quaternary structure, homotrimer. Interacts with matrix protein. In terms of processing, glycosylated and palmitoylated by host. Glycosylation is crucial for glycoprotein export at the cell surface.

The protein localises to the virion membrane. In terms of biological role, attaches the virus to host cellular receptor, inducing endocytosis of the virion. In the endosome, the acidic pH induces conformational changes in the glycoprotein trimer, which trigger fusion between virus and cell membrane. The chain is Glycoprotein (G) from Homo sapiens (Human).